We begin with the raw amino-acid sequence, 305 residues long: N-acetylmuramic acid 6-phosphate etherase (305 aa).

The region spanning I61–K224 is the SIS domain. Residue E89 is the Proton donor of the active site. Residue E120 is part of the active site.

This sequence belongs to the GCKR-like family. MurNAc-6-P etherase subfamily. Homodimer.

The enzyme catalyses N-acetyl-D-muramate 6-phosphate + H2O = N-acetyl-D-glucosamine 6-phosphate + (R)-lactate. Its pathway is amino-sugar metabolism; N-acetylmuramate degradation. Its function is as follows. Specifically catalyzes the cleavage of the D-lactyl ether substituent of MurNAc 6-phosphate, producing GlcNAc 6-phosphate and D-lactate. The sequence is that of N-acetylmuramic acid 6-phosphate etherase from Synechocystis sp. (strain ATCC 27184 / PCC 6803 / Kazusa).